Reading from the N-terminus, the 153-residue chain is Cytochrome c-type biogenesis protein CcmE (153 aa).

Residues 1 to 8 are Cytoplasmic-facing; sequence MTPVQRRR. Residues 9–29 form a helical; Signal-anchor for type II membrane protein membrane-spanning segment; sequence LVWVLLALLASGLATALVAMA. At 30–153 the chain is on the periplasmic side; it reads LERNIAYLYT…DVPVTAPEVR (124 aa). Histidine 123 and tyrosine 127 together coordinate heme.

It belongs to the CcmE/CycJ family.

The protein resides in the cell inner membrane. Heme chaperone required for the biogenesis of c-type cytochromes. Transiently binds heme delivered by CcmC and transfers the heme to apo-cytochromes in a process facilitated by CcmF and CcmH. This Stenotrophomonas maltophilia (strain R551-3) protein is Cytochrome c-type biogenesis protein CcmE.